A 269-amino-acid polypeptide reads, in one-letter code: 5'-nucleotidase SurE (269 aa).

The a divalent metal cation site is built by D8, D9, S39, and N92.

It belongs to the SurE nucleotidase family. A divalent metal cation serves as cofactor.

It localises to the cytoplasm. It carries out the reaction a ribonucleoside 5'-phosphate + H2O = a ribonucleoside + phosphate. In terms of biological role, nucleotidase that shows phosphatase activity on nucleoside 5'-monophosphates. The chain is 5'-nucleotidase SurE from Psychrobacter cryohalolentis (strain ATCC BAA-1226 / DSM 17306 / VKM B-2378 / K5).